A 379-amino-acid polypeptide reads, in one-letter code: Succinyl-diaminopimelate desuccinylase (379 aa).

Histidine 68 contacts Zn(2+). Aspartate 70 is an active-site residue. Aspartate 101 is a binding site for Zn(2+). The Proton acceptor role is filled by glutamate 134. Glutamate 135, glutamate 163, and histidine 352 together coordinate Zn(2+).

This sequence belongs to the peptidase M20A family. DapE subfamily. As to quaternary structure, homodimer. The cofactor is Zn(2+). It depends on Co(2+) as a cofactor.

It catalyses the reaction N-succinyl-(2S,6S)-2,6-diaminopimelate + H2O = (2S,6S)-2,6-diaminopimelate + succinate. The protein operates within amino-acid biosynthesis; L-lysine biosynthesis via DAP pathway; LL-2,6-diaminopimelate from (S)-tetrahydrodipicolinate (succinylase route): step 3/3. Catalyzes the hydrolysis of N-succinyl-L,L-diaminopimelic acid (SDAP), forming succinate and LL-2,6-diaminopimelate (DAP), an intermediate involved in the bacterial biosynthesis of lysine and meso-diaminopimelic acid, an essential component of bacterial cell walls. The protein is Succinyl-diaminopimelate desuccinylase of Dinoroseobacter shibae (strain DSM 16493 / NCIMB 14021 / DFL 12).